A 172-amino-acid chain; its full sequence is Large ribosomal subunit protein uL10 (172 aa).

This sequence belongs to the universal ribosomal protein uL10 family. As to quaternary structure, part of the ribosomal stalk of the 50S ribosomal subunit. The N-terminus interacts with L11 and the large rRNA to form the base of the stalk. The C-terminus forms an elongated spine to which 3 L12 dimers bind in a sequential fashion forming a heptameric L10(L12)2(L12)2(L12)2 complex.

Its function is as follows. Forms part of the ribosomal stalk, playing a central role in the interaction of the ribosome with GTP-bound translation factors. The chain is Large ribosomal subunit protein uL10 from Agrobacterium fabrum (strain C58 / ATCC 33970) (Agrobacterium tumefaciens (strain C58)).